Reading from the N-terminus, the 326-residue chain is DNA repair protein RAD51 homolog 4 (326 aa).

Residues 1–83 (MGVLRAGLCP…ELKTSTAILS (83 aa)) are preferentially binds ssDNA. 107 to 114 (GAPGSGKT) lines the ATP pocket.

The protein belongs to the RecA family. RAD51 subfamily. As to quaternary structure, part of the BCDX2 complex consisting of RAD51B, RAD51C, RAD51D and XRCC2; the complex has a ring-like structure arranged into a flat disc around a central channel. In the absence of DNA, the BCDX2 subcomplex XRCC2:RAD51D formed a multimeric ring structure; in the presence of single-stranded DNA it formed a filamentous structure with the ssDNA. Interacts with SWSAP1 and ZSWIM7; involved in homologous recombination repair. Interacts with BLM; required for stimulation of BLM activity by the BCDX2 subcomplex XRCC2:RAD51D.

The protein resides in the nucleus. Functionally, involved in the homologous recombination repair (HRR) pathway of double-stranded DNA breaks arising during DNA replication or induced by DNA-damaging agents. Bind to single-stranded DNA (ssDNA) and has DNA-dependent ATPase activity. Part of the RAD51 paralog protein complex BCDX2 which acts in the BRCA1-BRCA2-dependent HR pathway. Upon DNA damage, BCDX2 acts downstream of BRCA2 recruitment and upstream of RAD51 recruitment. BCDX2 binds predominantly to the intersection of the four duplex arms of the Holliday junction and to junction of replication forks. The BCDX2 complex was originally reported to bind single-stranded DNA, single-stranded gaps in duplex DNA and specifically to nicks in duplex DNA. Involved in telomere maintenance. The BCDX2 subcomplex XRCC2:RAD51D can stimulate Holliday junction resolution by BLM. This is DNA repair protein RAD51 homolog 4 (RAD51D) from Bos taurus (Bovine).